A 313-amino-acid polypeptide reads, in one-letter code: Porphobilinogen deaminase (313 aa).

Residue C242 is modified to S-(dipyrrolylmethanemethyl)cysteine.

It belongs to the HMBS family. In terms of assembly, monomer. The cofactor is dipyrromethane.

It catalyses the reaction 4 porphobilinogen + H2O = hydroxymethylbilane + 4 NH4(+). Its pathway is porphyrin-containing compound metabolism; protoporphyrin-IX biosynthesis; coproporphyrinogen-III from 5-aminolevulinate: step 2/4. Functionally, tetrapolymerization of the monopyrrole PBG into the hydroxymethylbilane pre-uroporphyrinogen in several discrete steps. The protein is Porphobilinogen deaminase of Yersinia pestis bv. Antiqua (strain Angola).